Consider the following 192-residue polypeptide: Elongation factor P (192 aa).

The residue at position 38 (K38) is an N6-(3,6-diaminohexanoyl)-5-hydroxylysine.

This sequence belongs to the elongation factor P family. In terms of processing, may be beta-lysylated on the epsilon-amino group of Lys-38 by the combined action of EpmA and EpmB, and then hydroxylated on the C5 position of the same residue by EpmC (if this protein is present). Lysylation is critical for the stimulatory effect of EF-P on peptide-bond formation. The lysylation moiety may extend toward the peptidyltransferase center and stabilize the terminal 3-CCA end of the tRNA. Hydroxylation of the C5 position on Lys-38 may allow additional potential stabilizing hydrogen-bond interactions with the P-tRNA.

It localises to the cytoplasm. The protein operates within protein biosynthesis; polypeptide chain elongation. Its function is as follows. Involved in peptide bond synthesis. Alleviates ribosome stalling that occurs when 3 or more consecutive Pro residues or the sequence PPG is present in a protein, possibly by augmenting the peptidyl transferase activity of the ribosome. Modification of Lys-38 is required for alleviation. This is Elongation factor P from Mannheimia succiniciproducens (strain KCTC 0769BP / MBEL55E).